A 957-amino-acid polypeptide reads, in one-letter code: Iron-responsive element-binding protein 2 (957 aa).

[4Fe-4S] cluster is bound by residues cysteine 506, cysteine 572, and cysteine 575.

It belongs to the aconitase/IPM isomerase family. It depends on [4Fe-4S] cluster as a cofactor. Ubiquitinated and degraded by the proteasome in presence of high level of iron and oxygen.

It is found in the cytoplasm. Its function is as follows. RNA-binding protein that binds to iron-responsive elements (IRES), which are stem-loop structures found in the 5'-UTR of ferritin, and delta aminolevulinic acid synthase mRNAs, and in the 3'-UTR of transferrin receptor mRNA. Binding to the IRE element in ferritin results in the repression of its mRNA translation. Binding of the protein to the transferrin receptor mRNA inhibits the degradation of this otherwise rapidly degraded mRNA. This Xenopus tropicalis (Western clawed frog) protein is Iron-responsive element-binding protein 2 (ireb2).